A 291-amino-acid polypeptide reads, in one-letter code: Undecaprenyl-diphosphatase 2 (291 aa).

6 helical membrane passes run 39 to 59, 85 to 105, 118 to 138, 198 to 218, 231 to 251, and 262 to 282; these read PGAAFTAITQIGTEAAVLIYF, ARMGWLVIVGSIPIGVLGLTL, ITATMLIVVGVIIGIADRMAA, AARYSFLLAIPAVLASGVFEL, PTLFATVIAFATGYVVIAWFM, and FVWYRIALGIVIIVLVSVGVL.

The protein belongs to the UppP family.

It localises to the cell membrane. It carries out the reaction di-trans,octa-cis-undecaprenyl diphosphate + H2O = di-trans,octa-cis-undecaprenyl phosphate + phosphate + H(+). Functionally, catalyzes the dephosphorylation of undecaprenyl diphosphate (UPP). Confers resistance to bacitracin. The sequence is that of Undecaprenyl-diphosphatase 2 from Streptomyces coelicolor (strain ATCC BAA-471 / A3(2) / M145).